Reading from the N-terminus, the 358-residue chain is MTKIAFTGGGTVGHVSVNLSLIPTAIEEGYDTFYIGSKNGIEREMIESQLPSIKYHSISSGKLRRYISWDNIKDIFKVLKGVLDARSVLKKEKPDLLFSKGGFVSVPVVIAAKSLKIPTIIHESDLTPGLANKISLKFAKKIYTTFEDTLNYLPKDKADFVGATVREDLKTGDKHRGYQLTEFNNDKKVLLVMGGSLGSKKLNDIIRQNLETLQETYQVIHLTGKGLLDNSYVGTKDYIQFEFVKDDLTDLLAITDTVISRAGSNAIYEFLALRIPMLLIPLGLDQSRGDQIDNAKHFESKGFGKTILEDTLTENELKTQLREIETNRDDIIKQMQTYKESFTRQDLFQKIINDALSE.

Residues R166, S196, and Q291 each coordinate UDP-N-acetyl-alpha-D-glucosamine.

It belongs to the glycosyltransferase 28 family. MurG subfamily.

It localises to the cell membrane. The catalysed reaction is Mur2Ac(oyl-L-Ala-gamma-D-Glu-L-Lys-D-Ala-D-Ala)-di-trans,octa-cis-undecaprenyl diphosphate + UDP-N-acetyl-alpha-D-glucosamine = beta-D-GlcNAc-(1-&gt;4)-Mur2Ac(oyl-L-Ala-gamma-D-Glu-L-Lys-D-Ala-D-Ala)-di-trans,octa-cis-undecaprenyl diphosphate + UDP + H(+). It participates in cell wall biogenesis; peptidoglycan biosynthesis. Cell wall formation. Catalyzes the transfer of a GlcNAc subunit on undecaprenyl-pyrophosphoryl-MurNAc-pentapeptide (lipid intermediate I) to form undecaprenyl-pyrophosphoryl-MurNAc-(pentapeptide)GlcNAc (lipid intermediate II). This is UDP-N-acetylglucosamine--N-acetylmuramyl-(pentapeptide) pyrophosphoryl-undecaprenol N-acetylglucosamine transferase from Staphylococcus saprophyticus subsp. saprophyticus (strain ATCC 15305 / DSM 20229 / NCIMB 8711 / NCTC 7292 / S-41).